The primary structure comprises 334 residues: MPSKESWSGRKTNRATVHKSKQEGRQQDLLIAALGMKLGSQKSSVTIWQPLKLFAYSQLTSLVRRATLKENEQIPKYEKVHNFKVHTFRGPHWCEYCANFMWGLIAQGVKCADCGLNVHKQCSKMVPNDCKPDLKHVKKVYSCDLTTLVKARTTKRPMVVDMCIREIEARGLNSEGLYRVSGFSDLIEDVKMAFDRDGEKADISVNMYEDINIITGALKLYFRDLPIPLITYDAYPKFIESAKIMDPDEQLETLHEALKLLPPAHCETLRYLMAHLKRVTLHEKENLMNAENLGIVFGPTLMRSPELDAMAALNDIRYQRLVVELLIKNEDILF.

Over residues 1–10 (MPSKESWSGR) the composition is skewed to polar residues. Residues 1–22 (MPSKESWSGRKTNRATVHKSKQ) are disordered. At Thr-67 the chain carries Phosphothreonine. The Phorbol-ester/DAG-type zinc-finger motif lies at 80–130 (VHNFKVHTFRGPHWCEYCANFMWGLIAQGVKCADCGLNVHKQCSKMVPNDC). The Rho-GAP domain maps to 143-334 (CDLTTLVKAR…LLIKNEDILF (192 aa)). Thr-215 bears the Phosphothreonine mark.

Interacts with EPHA4; effector of EPHA4 in axon guidance linking EPHA4 activation to RAC1 regulation. In terms of processing, phosphorylated. Phosphorylation is EPHA4 kinase activity-dependent.

In terms of biological role, GTPase-activating protein for p21-rac and a phorbol ester receptor. Involved in the assembly of neuronal locomotor circuits as a direct effector of EPHA4 in axon guidance. This chain is N-chimaerin (CHN1), found in Bos taurus (Bovine).